The primary structure comprises 114 residues: Photosystem II reaction center Psb28 protein (114 aa).

This sequence belongs to the Psb28 family. As to quaternary structure, part of the photosystem II complex.

It localises to the plastid. The protein resides in the chloroplast thylakoid membrane. The protein is Photosystem II reaction center Psb28 protein of Thalassiosira pseudonana (Marine diatom).